The sequence spans 787 residues: Aminodeoxychorismate synthase (787 aa).

The region spanning 16-233 (HVLFIDSYDS…LKLSFINNVK (218 aa)) is the Glutamine amidotransferase type-1 domain. Active-site residues include C112, H207, and E209. Positions 304–787 (MSSSVISENT…KLESNLQIFM (484 aa)) are PABB component.

This sequence in the C-terminal section; belongs to the anthranilate synthase component I family.

It localises to the cytoplasm. The enzyme catalyses chorismate + L-glutamine = 4-amino-4-deoxychorismate + L-glutamate. The protein operates within cofactor biosynthesis; tetrahydrofolate biosynthesis; 4-aminobenzoate from chorismate: step 1/2. Its function is as follows. Catalyzes the biosynthesis of 4-amino-4-deoxychorismate (ADC) from chorismate and glutamine. Required for the synthesis of 4-aminobenzoate (PABA), an important component in tetrahydrofolate biosynthesis. This Saccharomyces cerevisiae (strain ATCC 204508 / S288c) (Baker's yeast) protein is Aminodeoxychorismate synthase (ABZ1).